A 162-amino-acid chain; its full sequence is Succinate dehydrogenase assembly factor 2, mitochondrial (162 aa).

The N-terminal 35 residues, 1–35, are a transit peptide targeting the mitochondrion; the sequence is MHNMFPALTKTLSLQGYKIINSQTGSAAWSCGRRW.

The protein belongs to the SDHAF2 family. As to quaternary structure, interacts with the flavoprotein subunit within the SDH catalytic dimer.

It is found in the mitochondrion matrix. Its function is as follows. Plays an essential role in the assembly of succinate dehydrogenase (SDH), an enzyme complex (also referred to as respiratory complex II) that is a component of both the tricarboxylic acid (TCA) cycle and the mitochondrial electron transport chain, and which couples the oxidation of succinate to fumarate with the reduction of ubiquinone (coenzyme Q) to ubiquinol. Required for flavinylation (covalent attachment of FAD) of the flavoprotein subunit of the SDH catalytic dimer. The chain is Succinate dehydrogenase assembly factor 2, mitochondrial from Saccharomyces cerevisiae (strain RM11-1a) (Baker's yeast).